The chain runs to 83 residues: Turripeptide Lol11.1 (83 aa).

An N-terminal signal peptide occupies residues 1–27 (MARQMMTVGCLILIVVLLDMMVPVFNT).

It belongs to the conopeptide I2-like superfamily. In terms of processing, contains 4 disulfide bonds. As to expression, expressed by the venom duct.

It is found in the secreted. Functionally, acts as a neurotoxin by inhibiting voltage-gated potassium channels (Kv). The sequence is that of Turripeptide Lol11.1 from Iotyrris olangoensis (Sea snail).